Reading from the N-terminus, the 116-residue chain is Acyl-CoA-binding protein homolog 3 (116 aa).

Positions 3-92 (LQEKFDAAVE…LNDMFDKIAE (90 aa)) constitute an ACB domain. An acyl-CoA is bound by residues 34-38 (YSLFK), Lys-60, and Tyr-79.

This sequence belongs to the ACBP family.

Binds medium- and long-chain acyl-CoA esters with very high affinity and may function as an intracellular carrier of acyl-CoA esters. This is Acyl-CoA-binding protein homolog 3 (acbp-3) from Caenorhabditis elegans.